The sequence spans 420 residues: Probable protein phosphatase 2C 73 (420 aa).

Residues 33 to 336 (GVSMHTKQGW…DDCAVVCLFL (304 aa)) enclose the PPM-type phosphatase domain. Positions 69 and 70 each coordinate Mn(2+). Residues 96-105 (LKTEQDPSSN) are compositionally biased toward polar residues. The tract at residues 96–119 (LKTEQDPSSNTDKETLEKSDCTSL) is disordered. Positions 106-115 (TDKETLEKSD) are enriched in basic and acidic residues. 2 residues coordinate Mn(2+): D281 and D327.

The protein belongs to the PP2C family. It depends on Mg(2+) as a cofactor. Requires Mn(2+) as cofactor.

The enzyme catalyses O-phospho-L-seryl-[protein] + H2O = L-seryl-[protein] + phosphate. The catalysed reaction is O-phospho-L-threonyl-[protein] + H2O = L-threonyl-[protein] + phosphate. This is Probable protein phosphatase 2C 73 from Oryza sativa subsp. japonica (Rice).